Reading from the N-terminus, the 168-residue chain is Cyclic pyranopterin monophosphate synthase (168 aa).

Residues 75-77 (MCH) and 115-116 (ME) contribute to the substrate site. The active site involves aspartate 130.

It belongs to the MoaC family. As to quaternary structure, homohexamer; trimer of dimers.

It catalyses the reaction (8S)-3',8-cyclo-7,8-dihydroguanosine 5'-triphosphate = cyclic pyranopterin phosphate + diphosphate. The protein operates within cofactor biosynthesis; molybdopterin biosynthesis. Functionally, catalyzes the conversion of (8S)-3',8-cyclo-7,8-dihydroguanosine 5'-triphosphate to cyclic pyranopterin monophosphate (cPMP). This is Cyclic pyranopterin monophosphate synthase from Bacillus licheniformis (strain ATCC 14580 / DSM 13 / JCM 2505 / CCUG 7422 / NBRC 12200 / NCIMB 9375 / NCTC 10341 / NRRL NRS-1264 / Gibson 46).